Reading from the N-terminus, the 206-residue chain is Small ribosomal subunit protein uS4 (206 aa).

The region spanning 96–158 (SRLDNVVYRM…AKGQLRIKGA (63 aa)) is the S4 RNA-binding domain.

The protein belongs to the universal ribosomal protein uS4 family. As to quaternary structure, part of the 30S ribosomal subunit. Contacts protein S5. The interaction surface between S4 and S5 is involved in control of translational fidelity.

Functionally, one of the primary rRNA binding proteins, it binds directly to 16S rRNA where it nucleates assembly of the body of the 30S subunit. With S5 and S12 plays an important role in translational accuracy. In Coxiella burnetii (strain CbuK_Q154) (Coxiella burnetii (strain Q154)), this protein is Small ribosomal subunit protein uS4.